A 260-amino-acid chain; its full sequence is Ribonuclease HII (260 aa).

The region spanning 71–259 (ELVAGVDEVG…VHDAIVNKKN (189 aa)) is the RNase H type-2 domain. A divalent metal cation contacts are provided by Asp-77, Glu-78, and Asp-169.

The protein belongs to the RNase HII family. It depends on Mn(2+) as a cofactor. The cofactor is Mg(2+).

The protein resides in the cytoplasm. It catalyses the reaction Endonucleolytic cleavage to 5'-phosphomonoester.. Its function is as follows. Endonuclease that specifically degrades the RNA of RNA-DNA hybrids. In Leuconostoc citreum (strain KM20), this protein is Ribonuclease HII.